Reading from the N-terminus, the 235-residue chain is tRNA (guanine-N(1)-)-methyltransferase (235 aa).

Residues Gly-112 and 132–137 (IGDYVI) contribute to the S-adenosyl-L-methionine site.

It belongs to the RNA methyltransferase TrmD family. Homodimer.

It is found in the cytoplasm. The catalysed reaction is guanosine(37) in tRNA + S-adenosyl-L-methionine = N(1)-methylguanosine(37) in tRNA + S-adenosyl-L-homocysteine + H(+). In terms of biological role, specifically methylates guanosine-37 in various tRNAs. In Anaplasma marginale (strain Florida), this protein is tRNA (guanine-N(1)-)-methyltransferase.